The primary structure comprises 320 residues: G-protein coupled receptor homolog FPV021 (320 aa).

At 1–18 (MDTDYGTVHTQQSVKGNT) the chain is on the extracellular side. Residues 19–39 (LILLIYFISFIVGFPGNCTVI) form a helical membrane-spanning segment. At 40–52 (WFTGYRWKKSVTT) the chain is on the cytoplasmic side. Residues 53–73 (IWFLNLAIADTLFVIFIPFEI) traverse the membrane as a helical segment. Topologically, residues 74 to 91 (TYILMGHYWPFGLFVCRI) are extracellular. Cysteines 89 and 167 form a disulfide. The helical transmembrane segment at 92-112 (GSLMFNTGMYASIFFLTFISI) threads the bilayer. Residues 113–133 (DRYCLAFRRDICNKYRYRINI) lie on the Cytoplasmic side of the membrane. The helical transmembrane segment at 134 to 154 (MVMIIISWIISILLSTPYMYF) threads the bilayer. Residues 155 to 188 (KNTNEKYRNNRDCLEDYHSDNNTYLLRRVVFCIS) lie on the Extracellular side of the membrane. Asparagine 175 is a glycosylation site (N-linked (GlcNAc...) asparagine; by host). The chain crosses the membrane as a helical span at residues 189 to 209 (LVMRYLVPSVVMLFCYCLLLF). At 210-222 (KHSLFLSKGQTYT) the chain is on the cytoplasmic side. A helical transmembrane segment spans residues 223 to 243 (IVIMITSFMVLWTPYNILYFI). The Extracellular portion of the chain corresponds to 244–260 (DVIGSHYYNADTIIDAA). The helical transmembrane segment at 261 to 281 (PISISLIFLSSSINPMIYMLV) threads the bilayer. At 282-320 (GRYVSFENYSMRESLKLILSEERDNQTNHENEIKMENIN) the chain is on the cytoplasmic side.

The protein belongs to the G-protein coupled receptor 1 family.

The protein localises to the host cell membrane. The chain is G-protein coupled receptor homolog FPV021 from Vertebrata (FPV).